A 440-amino-acid polypeptide reads, in one-letter code: MGPPGSPWQWVLLLLGLLLPPAAPFWLLNVLFPPHTTPKAELSNHTRPVILVPGCLGNQLEAKLDKPSVVNWMCYRKTEDFFTIWLDLNMFLPLGVDCWIDNTRVVYNRSSGRVVISPGVQIRVPGFGKTYSVEYLDNNKLAGYMHTLVQNLVNNGYVRDETVRAAPYDWRLEPSQQEEYYGKLAGLVEEMHAAYGKPVFLIGHSLGCLHLLYFLLRQPQSWKDRFIDGFISLGAPWGGSIKPMLVLASGDNQGIPLMSSIKLREEQRITTTSPWMFPSQGVWPEDHVFISTPSFNYTGRDFKRFFEDLHFEEGWYMWLQSRDLLAGLPAPGVEVYCLYGIGLPTPHTYIYDHGFPYTDPVGVLYEDGDDTVATSSTDLCGLWRGRQPQPVHLLPLHETEHLNMVFSNQTLEHINAILLGAYRSGTPASPTASPGSPPPE.

The first 24 residues, 1–24 (MGPPGSPWQWVLLLLGLLLPPAAP), serve as a signal peptide directing secretion. A glycan (N-linked (GlcNAc...) asparagine) is linked at Asn-44. Cys-74 and Cys-98 are disulfide-bonded. The N-linked (GlcNAc...) asparagine glycan is linked to Asn-108. Ser-205 (nucleophile) is an active-site residue. Asn-296 carries an N-linked (GlcNAc...) asparagine glycan. The cysteines at positions 337 and 380 are disulfide-linked. Catalysis depends on charge relay system residues Asp-369 and His-401. Asn-408 carries N-linked (GlcNAc...) asparagine glycosylation.

It belongs to the AB hydrolase superfamily. Lipase family. As to expression, detected in blood plasma (at protein level). Highly expressed in liver.

Its subcellular location is the secreted. The enzyme catalyses a sterol + a 1,2-diacyl-sn-glycero-3-phosphocholine = a sterol ester + a 1-acyl-sn-glycero-3-phosphocholine. It catalyses the reaction a 1-O-alkyl-2-acetyl-sn-glycero-3-phosphocholine + H2O = a 1-O-alkyl-sn-glycero-3-phosphocholine + acetate + H(+). It carries out the reaction a 1-hexadecanoyl-2-acyl-sn-glycero-3-phosphocholine + (24S)-hydroxycholesterol = (24S)-24-hydroxycholesterol ester + 1-hexadecanoyl-sn-glycero-3-phosphocholine. The catalysed reaction is (24S)-hydroxycholesterol + 1-hexadecanoyl-2-(9Z,12Z-octadecadienoyl)-sn-glycero-3-phosphocholine = (24S)-hydroxycholesterol 3-linoleoate + 1-hexadecanoyl-sn-glycero-3-phosphocholine. The enzyme catalyses 1-hexadecanoyl-2-(5Z,8Z,11Z,14Z-eicosatetraenoyl)-sn-glycero-3-phosphocholine + cholesterol = cholesteryl (5Z,8Z,11Z,14Z)-eicosatetraenoate + 1-hexadecanoyl-sn-glycero-3-phosphocholine. It catalyses the reaction 1-hexadecanoyl-2-(9Z-octadecenoyl)-sn-glycero-3-phosphocholine + cholesterol = cholesteryl (9Z-octadecenoate) + 1-hexadecanoyl-sn-glycero-3-phosphocholine. It carries out the reaction 1-hexadecanoyl-2-(8Z,11Z,14Z-eicosatrienoyl)-sn-glycero-3-phosphocholine + cholesterol = cholesteryl (8Z,11Z,14Z)-eicosatrienoate + 1-hexadecanoyl-sn-glycero-3-phosphocholine. The catalysed reaction is 1-hexadecanoyl-2-(5Z,8Z,11Z-eicosatrienoyl)-sn-glycero-3-phosphocholine + cholesterol = cholesteryl (5Z,8Z,11Z)-eicosatrienoate + 1-hexadecanoyl-sn-glycero-3-phosphocholine. The enzyme catalyses 1-hexadecanoyl-2-(5Z,8Z,11Z,14Z,17Z-eicosapentaenoyl)-sn-glycero-3-phosphocholine + cholesterol = (5Z,8Z,11Z,14Z,17Z-eicosapentaenoyl)-cholesterol + 1-hexadecanoyl-sn-glycero-3-phosphocholine. It catalyses the reaction 1-hexadecanoyl-2-(9Z,12Z-octadecadienoyl)-sn-glycero-3-phosphocholine + cholesterol = cholesteryl (9Z,12Z)-octadecadienoate + 1-hexadecanoyl-sn-glycero-3-phosphocholine. It carries out the reaction 1-hexadecanoyl-2-(6Z,9Z,12Z-octadecatrienoyl)-sn-glycero-3-phosphocholine + cholesterol = (6Z,9Z,12Z-octadecatrienoyl)-cholesterol + 1-hexadecanoyl-sn-glycero-3-phosphocholine. The catalysed reaction is 1-hexadecanoyl-2-(11Z,14Z,17Z-eicosatrienoyl)-sn-glycero-3-phosphocholine + cholesterol = (11Z,14Z,17Z-eicosatrienoyl)-cholesterol + 1-hexadecanoyl-sn-glycero-3-phosphocholine. The enzyme catalyses 1-hexadecanoyl-2-(9Z,12Z,15Z-octadecatrienoyl)-sn-glycero-3-phosphocholine + cholesterol = (9Z,12Z,15Z-octadecatrienoyl)-cholesterol + 1-hexadecanoyl-sn-glycero-3-phosphocholine. It catalyses the reaction 1-hexadecanoyl-2-(9Z,12Z-octadecadienoyl)-sn-glycero-3-phosphocholine + H2O = (9Z,12Z)-octadecadienoate + 1-hexadecanoyl-sn-glycero-3-phosphocholine + H(+). It carries out the reaction 1-hexadecanoyl-2-(5Z,8Z,11Z,14Z-eicosatetraenoyl)-sn-glycero-3-phosphocholine + H2O = 1-hexadecanoyl-sn-glycero-3-phosphocholine + (5Z,8Z,11Z,14Z)-eicosatetraenoate + H(+). The catalysed reaction is a 1-O-alkyl-2-acetyl-sn-glycero-3-phosphocholine + 1-hexadecanoyl-sn-glycero-3-phosphocholine = 1-hexadecanoyl-2-acetyl-sn-glycero-3-phosphocholine + a 1-O-alkyl-sn-glycero-3-phosphocholine. In terms of biological role, central enzyme in the extracellular metabolism of plasma lipoproteins. Synthesized mainly in the liver and secreted into plasma where it converts cholesterol and phosphatidylcholines (lecithins) to cholesteryl esters and lysophosphatidylcholines on the surface of high and low density lipoproteins (HDLs and LDLs). The cholesterol ester is then transported back to the liver. Also produced in the brain by primary astrocytes, and esterifies free cholesterol on nascent APOE-containing lipoproteins secreted from glia and influences cerebral spinal fluid (CSF) APOE- and APOA1 levels. Together with APOE and the cholesterol transporter ABCA1, plays a key role in the maturation of glial-derived, nascent lipoproteins. Required for remodeling high-density lipoprotein particles into their spherical forms. Has a preference for plasma 16:0-18:2 or 18:O-18:2 phosphatidylcholines. Catalyzes the hydrolysis of 1-O-alkyl-2-acetyl-sn-glycero-3-phosphocholine (platelet-activating factor or PAF) to 1-O-alkyl-sn-glycero-3-phosphocholine (lyso-PAF). Also catalyzes the transfer of the acetate group from PAF to 1-hexadecanoyl-sn-glycero-3-phosphocholine forming lyso-PAF. Catalyzes the esterification of (24S)-hydroxycholesterol (24(S)OH-C), also known as cerebrosterol to produce 24(S)OH-C monoesters. The polypeptide is Phosphatidylcholine-sterol acyltransferase (LCAT) (Oryctolagus cuniculus (Rabbit)).